Reading from the N-terminus, the 361-residue chain is Phosphoserine aminotransferase (361 aa).

R42 lines the L-glutamate pocket. Pyridoxal 5'-phosphate is bound by residues 76 to 77 (AT), W102, T152, D172, and Q195. K196 bears the N6-(pyridoxal phosphate)lysine mark. Position 237-238 (237-238 (NT)) interacts with pyridoxal 5'-phosphate.

It belongs to the class-V pyridoxal-phosphate-dependent aminotransferase family. SerC subfamily. Homodimer. Pyridoxal 5'-phosphate is required as a cofactor.

It localises to the cytoplasm. It carries out the reaction O-phospho-L-serine + 2-oxoglutarate = 3-phosphooxypyruvate + L-glutamate. It catalyses the reaction 4-(phosphooxy)-L-threonine + 2-oxoglutarate = (R)-3-hydroxy-2-oxo-4-phosphooxybutanoate + L-glutamate. The protein operates within amino-acid biosynthesis; L-serine biosynthesis; L-serine from 3-phospho-D-glycerate: step 2/3. It participates in cofactor biosynthesis; pyridoxine 5'-phosphate biosynthesis; pyridoxine 5'-phosphate from D-erythrose 4-phosphate: step 3/5. Its function is as follows. Catalyzes the reversible conversion of 3-phosphohydroxypyruvate to phosphoserine and of 3-hydroxy-2-oxo-4-phosphonooxybutanoate to phosphohydroxythreonine. In Xanthomonas campestris pv. campestris (strain 8004), this protein is Phosphoserine aminotransferase.